Here is a 156-residue protein sequence, read N- to C-terminus: MNIHFIVVGQKMPGWVQTGYAEYAKRLPKACTLKLVELPMATRGKSGSVAQYKAEEAKRILSAVPKGAKLIVLDEKGQELTTVQFSQKLDDWLGSGQDVALIVGGPDGLDSSLIQQAEWKWGLSKLTLPHPLVRVMVAEQIYRAWSVLQNHPYHRE.

Residues L73, G104, and 123–128 each bind S-adenosyl-L-methionine; that span reads LSKLTL.

Belongs to the RNA methyltransferase RlmH family. In terms of assembly, homodimer.

It is found in the cytoplasm. It carries out the reaction pseudouridine(1915) in 23S rRNA + S-adenosyl-L-methionine = N(3)-methylpseudouridine(1915) in 23S rRNA + S-adenosyl-L-homocysteine + H(+). Specifically methylates the pseudouridine at position 1915 (m3Psi1915) in 23S rRNA. The protein is Ribosomal RNA large subunit methyltransferase H of Hydrogenovibrio crunogenus (strain DSM 25203 / XCL-2) (Thiomicrospira crunogena).